The primary structure comprises 199 residues: Golgi to ER traffic protein 1 (199 aa).

At 1–11 (MLLPDLHPYTI) the chain is on the lumenal side. A helical transmembrane segment spans residues 12-31 (LLSIFIVLLLKQLVASIGKS). Residues 32-115 (TIKEFVWLVY…SIDKVSNALL (84 aa)) lie on the Cytoplasmic side of the membrane. Positions 66–116 (EKRAISAQDEYAKWTKLNRQADKLSAELQKLNQEIQQQKASIDKVSNALLL) form a coiled coil. Residues 116–136 (LVLTTLPIWVARVLYRNTHLF) traverse the membrane as a helical segment. Topologically, residues 137-160 (YIRQGIFPKYVEWVLALPFLPNGA) are lumenal. The helical transmembrane segment at 161–177 (VGLTIWMFAVNSVVSNF) threads the bilayer. The Cytoplasmic segment spans residues 178–199 (AFLVSFPFAKKVSKPVRDTKIE).

This sequence belongs to the WRB/GET1 family. As to quaternary structure, component of the Golgi to ER traffic (GET) complex, which is composed of GET1, GET2 and GET3. Within the complex, GET1 and GET2 form a heterotetramer which is stabilized by phosphatidylinositol binding and which binds to the GET3 homodimer.

The protein localises to the endoplasmic reticulum membrane. It is found in the golgi apparatus membrane. Functionally, required for the post-translational delivery of tail-anchored (TA) proteins to the endoplasmic reticulum. Together with GET2, acts as a membrane receptor for soluble GET3, which recognizes and selectively binds the transmembrane domain of TA proteins in the cytosol. The GET complex cooperates with the HDEL receptor ERD2 to mediate the ATP-dependent retrieval of resident ER proteins that contain a C-terminal H-D-E-L retention signal from the Golgi to the ER. The polypeptide is Golgi to ER traffic protein 1 (Candida dubliniensis (strain CD36 / ATCC MYA-646 / CBS 7987 / NCPF 3949 / NRRL Y-17841) (Yeast)).